The following is a 99-amino-acid chain: Protein Frey (99 aa).

A helical transmembrane segment spans residues Gly-7–Leu-29. The disordered stretch occupies residues Pro-65–Pro-88.

Interacts with SPPL2C (via active sites); the interaction stabilizes FREY1 protein and inhibits SPPL2C proteolytic activity. Interacts with IZUMO1; the interaction retains IZUMO1 at the endoplasmic reticulum membrane and coordinates IZUMO1 complex assembly.

Its subcellular location is the endoplasmic reticulum membrane. Functionally, key regulator for male fertility expressed transiently in round spermatids where it recruits IZUMO1 at the endoplasmic reticulum (ER) membrane and coordinates the oolemmal binding multimeric complex (IZUMO1 complex) assembly. Upon complete assembly of the IZUMO1 complex, its ER retention is released, facilitating IZUMO1 complex export to the acrosome. Through the interaction with SPPL2C, inhibits its intramembrane protease activity directly accessing the catalytic center of an I-CLiP. The polypeptide is Protein Frey (Ailuropoda melanoleuca (Giant panda)).